The primary structure comprises 131 residues: Large ribosomal subunit protein bL17 (131 aa).

This sequence belongs to the bacterial ribosomal protein bL17 family. As to quaternary structure, part of the 50S ribosomal subunit. Contacts protein L32.

The protein is Large ribosomal subunit protein bL17 of Hamiltonella defensa subsp. Acyrthosiphon pisum (strain 5AT).